We begin with the raw amino-acid sequence, 475 residues long: MRVMFAASEATPFSKSGGLGDVIGSLPFYLKKLGVDVSVILPKYQEIPQDLKMKMKWIKSMTVPVGWRNQFCGIEILSYKDIHFYFVDNQYYFNREGFYGHNDDGERFAFFSRSVLEILPHIDCKPDIIHCHDWQTAMISYLLKTQYQHHGFYKNIKTVFTIHNLKYQGVFPQEVLGDLFNGSQQHFNEGGVEYHGNVNYMKGGLNFSDYITTVSPTYAQEIQDPFFGEGLEGVLSRKKKQLQGVTNGIDDSVYNPQTDIHLFKNFSSENLRNKKDNKLGLQERLNLAVDAKIPMIGMVTRLVEQKGLDLVANQLEKLMEEEIQLVVLGTGDHQYEEIFRQAAIKYPERISTNLFFDEVLAQQIYGGSDFFLMPSLFEPCGLGQLIALRYGTVPIVRETGGLKDTIQYYDEVSKEGNGFTFTNYNAHDMFNTIKEAIRLYPDKRKFNKVVRNAMNTKVGWEESAKTYLKLYRSLG.

ADP-alpha-D-glucose is bound at residue Lys15.

The protein belongs to the glycosyltransferase 1 family. Bacterial/plant glycogen synthase subfamily.

The catalysed reaction is [(1-&gt;4)-alpha-D-glucosyl](n) + ADP-alpha-D-glucose = [(1-&gt;4)-alpha-D-glucosyl](n+1) + ADP + H(+). It functions in the pathway glycan biosynthesis; glycogen biosynthesis. Its function is as follows. Synthesizes alpha-1,4-glucan chains using ADP-glucose. The protein is Glycogen synthase of Alkaliphilus metalliredigens (strain QYMF).